We begin with the raw amino-acid sequence, 525 residues long: Bifunctional enzyme NanE/NanK (525 aa).

A manNAc-6-P epimerase region spans residues 1 to 241; sequence MRGSPRNLCR…DAVESAAKPS (241 aa). A manNAc kinase region spans residues 242–525; that stretch reads SPVLAFDIGG…VADLAATYFS (284 aa). ATP-binding positions include 246 to 253 and 372 to 379; these read AFDIGGTK and GIGGGIVL.

The protein in the N-terminal section; belongs to the NanE family. In the C-terminal section; belongs to the ROK (NagC/XylR) family. NanK subfamily.

The enzyme catalyses an N-acyl-D-glucosamine 6-phosphate = an N-acyl-D-mannosamine 6-phosphate. It carries out the reaction an N-acyl-D-mannosamine + ATP = an N-acyl-D-mannosamine 6-phosphate + ADP + H(+). It functions in the pathway amino-sugar metabolism; N-acetylneuraminate degradation; D-fructose 6-phosphate from N-acetylneuraminate: step 2/5. Its pathway is amino-sugar metabolism; N-acetylneuraminate degradation; D-fructose 6-phosphate from N-acetylneuraminate: step 3/5. In terms of biological role, converts N-acetylmannosamine-6-phosphate (ManNAc-6-P) to N-acetylglucosamine-6-phosphate (GlcNAc-6-P). Catalyzes the phosphorylation of N-acetylmannosamine (ManNAc) to ManNAc-6-P. The polypeptide is Bifunctional enzyme NanE/NanK (nanEK) (Brucella suis biovar 1 (strain 1330)).